A 593-amino-acid chain; its full sequence is Zinc metalloproteinase-disintegrin-like atrase-B (593 aa).

Residues 1 to 20 form the signal peptide; it reads MIQALLVIICLAVFPHQGSS. Residues 21–191 constitute a propeptide that is removed on maturation; the sequence is IILESGNVND…DESIEKTSQL (171 aa). The region spanning 205 to 400 is the Peptidase M12B domain; it reads KYIEFYVIVD…DRPQCILNKP (196 aa). Residues Glu208 and Asp292 each coordinate Ca(2+). Intrachain disulfides connect Cys316–Cys395, Cys356–Cys379, and Cys358–Cys363. Residue Asn319 is glycosylated (N-linked (GlcNAc...) asparagine). His341 is a Zn(2+) binding site. The active site involves Glu342. 2 residues coordinate Zn(2+): His345 and His351. 8 residues coordinate Ca(2+): Cys395, Asn398, Ile410, Asn413, Phe415, Glu417, Glu420, and Asp423. The 70-residue stretch at 408–477 folds into the Disintegrin domain; the sequence is PPICGNYFVE…ECPTDSLQRN (70 aa). Intrachain disulfides connect Cys422/Cys435, Cys424/Cys430, Cys434/Cys440, Cys449/Cys469, Cys456/Cys488, Cys481/Cys493, Cys500/Cys550, Cys515/Cys558, Cys528/Cys538, Cys545/Cys581, and Cys575/Cys586. The short motif at 455–457 is the D/ECD-tripeptide element; sequence DCD. Ca(2+) is bound by residues Asp457, Leu458, Glu460, and Asp472. N-linked (GlcNAc...) asparagine glycosylation is present at Asn490.

This sequence belongs to the venom metalloproteinase (M12B) family. P-III subfamily. P-IIIa sub-subfamily. Monomer. Requires Zn(2+) as cofactor. Expressed by the venom gland.

It is found in the secreted. Its activity is regulated as follows. Inhibited by EDTA, EGTA, 1,10-phenanthroline and DTT. Not inhibited by PMSF and SBTI. In terms of biological role, snake venom zinc protease that inhibits the classical and alternative pathways of complement by cleaving factor B, C6, C7, and C8. Also slowly and selectively degrades alpha-chain of fibrinogen (FGA), and shows edema-inducing activity. This is Zinc metalloproteinase-disintegrin-like atrase-B from Naja atra (Chinese cobra).